Consider the following 250-residue polypeptide: 3-deoxy-manno-octulosonate cytidylyltransferase (250 aa).

The protein belongs to the KdsB family.

It is found in the cytoplasm. It carries out the reaction 3-deoxy-alpha-D-manno-oct-2-ulosonate + CTP = CMP-3-deoxy-beta-D-manno-octulosonate + diphosphate. Its pathway is nucleotide-sugar biosynthesis; CMP-3-deoxy-D-manno-octulosonate biosynthesis; CMP-3-deoxy-D-manno-octulosonate from 3-deoxy-D-manno-octulosonate and CTP: step 1/1. The protein operates within bacterial outer membrane biogenesis; lipopolysaccharide biosynthesis. Activates KDO (a required 8-carbon sugar) for incorporation into bacterial lipopolysaccharide in Gram-negative bacteria. This Legionella pneumophila (strain Corby) protein is 3-deoxy-manno-octulosonate cytidylyltransferase.